An 813-amino-acid chain; its full sequence is Tax1-binding protein 1 homolog (813 aa).

A phosphoserine mark is found at Ser-124, Ser-138, and Ser-225. A coiled-coil region spans residues 144–627; that stretch reads TTKAGLLELK…LENQAERKME (484 aa). The interval 320 to 420 is oligomerization; it reads EEIGRLQLCL…ELKLNAMKKD (101 aa). The segment covering 489–502 has biased composition (polar residues); it reads DASVNTDPATSAST. The interval 489–508 is disordered; that stretch reads DASVNTDPATSASTVDVKPS. Phosphoserine is present on residues Ser-617, Ser-633, and Ser-690. Positions 663–738 are disordered; that stretch reads YASQETRDGA…DPPSQHLRGH (76 aa). 2 consecutive UBZ1-type zinc fingers follow at residues 751–777 and 778–804; these read HKKCPLCELMFPPNYDQSKFEEHVESH and WKVCPMCSEQFPPDYDQQVFERHVQTH. Zn(2+)-binding residues include Cys-754, Cys-757, His-773, His-777, Cys-781, Cys-784, His-800, and His-804.

In terms of assembly, homooligomer. Interacts with TNFAIP3. Interacts with STARD13. Interacts with MYO6. Interacts with TOM1; the interaction is indirect and is mediated by MYO6, which acts as a bridge between TOM1 and TAX1BP1. Interacts with MAVS; this interaction induces MAVS polyubiquitination. Interacts with TNIP1. Interacts with TRAF6; this interaction mediates deubiquitination of TRAF6 and inhibition of NF-kappa-B activation. Interacts with RIPK1; this interaction negatively regulates RIPK1 ubiquitination. Interacts with NBR1. Interacts with TBK1. Interacts with RB1CC1. Interacts with SQSTM1. Interacts with AZI2.

Its subcellular location is the cytoplasm. The protein resides in the mitochondrion. It is found in the preautophagosomal structure. The protein localises to the cytoplasmic vesicle. It localises to the autophagosome. Its function is as follows. Ubiquitin-binding adapter that participates in inflammatory, antiviral and innate immune processes as well as selective autophagy regulation. Plays a key role in the negative regulation of NF-kappa-B and IRF3 signalings by acting as an adapter for the ubiquitin-editing enzyme A20/TNFAIP3 to bind and inactivate its substrates. Disrupts the interactions between the E3 ubiquitin ligase TRAF3 and TBK1/IKBKE to attenuate 'Lys63'-linked polyubiquitination of TBK1 and thereby IFN-beta production. Also recruits A20/TNFAIP3 to ubiquitinated signaling proteins TRAF6 and RIPK1, leading to their deubiquitination and disruption of IL-1 and TNF-induced NF-kappa-B signaling pathways. Inhibits virus-induced apoptosis by inducing the 'Lys-48'-linked polyubiquitination and degradation of MAVS via recruitment of the E3 ligase ITCH, thereby attenuating MAVS-mediated apoptosis signaling. As a macroautophagy/autophagy receptor, facilitates the xenophagic clearance of pathogenic bacteria such as Salmonella typhimurium and Mycobacterium tuberculosis. Upon NBR1 recruitment to the SQSTM1-ubiquitin condensates, acts as the major recruiter of RB1CC1 to these ubiquitin condensates to promote their autophagic degradation. The protein is Tax1-binding protein 1 homolog (TAX1BP1) of Pongo abelii (Sumatran orangutan).